Reading from the N-terminus, the 309-residue chain is PI-PLC X domain-containing protein 1 (309 aa).

The 177-residue stretch at 17–193 (HMWDIPLWNL…QVILSYDDES (177 aa)) folds into the PI-PLC X-box domain.

The chain is PI-PLC X domain-containing protein 1 (plcxd1) from Danio rerio (Zebrafish).